The chain runs to 282 residues: ATP synthase gamma chain (282 aa).

This sequence belongs to the ATPase gamma chain family. As to quaternary structure, F-type ATPases have 2 components, CF(1) - the catalytic core - and CF(0) - the membrane proton channel. CF(1) has five subunits: alpha(3), beta(3), gamma(1), delta(1), epsilon(1). CF(0) has three main subunits: a, b and c.

The protein resides in the cell inner membrane. Functionally, produces ATP from ADP in the presence of a proton gradient across the membrane. The gamma chain is believed to be important in regulating ATPase activity and the flow of protons through the CF(0) complex. This Fusobacterium nucleatum subsp. nucleatum (strain ATCC 25586 / DSM 15643 / BCRC 10681 / CIP 101130 / JCM 8532 / KCTC 2640 / LMG 13131 / VPI 4355) protein is ATP synthase gamma chain.